The sequence spans 311 residues: Malate dehydrogenase (311 aa).

Residues 7–13 (GAAGGIG) and Asp-34 each bind NAD(+). Substrate-binding residues include Arg-81 and Arg-87. NAD(+)-binding positions include Asn-94 and 117-119 (ITN). Substrate contacts are provided by Asn-119 and Arg-153. Catalysis depends on His-177, which acts as the Proton acceptor. NAD(+) is bound at residue Met-227.

It belongs to the LDH/MDH superfamily. MDH type 1 family. As to quaternary structure, homodimer.

The catalysed reaction is (S)-malate + NAD(+) = oxaloacetate + NADH + H(+). Its function is as follows. Catalyzes the reversible oxidation of malate to oxaloacetate. The chain is Malate dehydrogenase from Shewanella putrefaciens (strain CN-32 / ATCC BAA-453).